A 303-amino-acid polypeptide reads, in one-letter code: Putative AraC-like transcription regulator (303 aa).

One can recognise an HTH araC/xylS-type domain in the interval 202–300 (ASALTFLHRD…GMNPGDYRKH (99 aa)). 2 DNA-binding regions (H-T-H motif) span residues 219–240 (AELASAAAVSRSTLAARFKATV) and 267–290 (LAAIAHSVGYGSESALSVAFKRVL).

This is Putative AraC-like transcription regulator from Streptomyces antibioticus.